A 351-amino-acid chain; its full sequence is Ribosomal RNA large subunit methyltransferase M (351 aa).

S-adenosyl-L-methionine contacts are provided by residues serine 186, 219–222 (APGG), aspartate 238, aspartate 258, and aspartate 274. The Proton acceptor role is filled by lysine 303.

Belongs to the class I-like SAM-binding methyltransferase superfamily. RNA methyltransferase RlmE family. RlmM subfamily. In terms of assembly, monomer.

The protein resides in the cytoplasm. It carries out the reaction cytidine(2498) in 23S rRNA + S-adenosyl-L-methionine = 2'-O-methylcytidine(2498) in 23S rRNA + S-adenosyl-L-homocysteine + H(+). Catalyzes the 2'-O-methylation at nucleotide C2498 in 23S rRNA. This chain is Ribosomal RNA large subunit methyltransferase M, found in Xylella fastidiosa (strain 9a5c).